A 464-amino-acid chain; its full sequence is Glutamate--tRNA ligase 1 (464 aa).

A 'HIGH' region motif is present at residues 10-20 (PSPTGYLHIGG). The 'KMSKS' region motif lies at 238–242 (KLSKR). ATP is bound at residue Lys241.

This sequence belongs to the class-I aminoacyl-tRNA synthetase family. Glutamate--tRNA ligase type 1 subfamily. As to quaternary structure, monomer.

It localises to the cytoplasm. The enzyme catalyses tRNA(Glu) + L-glutamate + ATP = L-glutamyl-tRNA(Glu) + AMP + diphosphate. Its function is as follows. Catalyzes the attachment of glutamate to tRNA(Glu) in a two-step reaction: glutamate is first activated by ATP to form Glu-AMP and then transferred to the acceptor end of tRNA(Glu). This is Glutamate--tRNA ligase 1 from Helicobacter hepaticus (strain ATCC 51449 / 3B1).